Reading from the N-terminus, the 318-residue chain is Acetyl-coenzyme A carboxylase carboxyl transferase subunit alpha (318 aa).

Positions 41-295 (HLEKKNEELT…KQRILTDLNE (255 aa)) constitute a CoA carboxyltransferase C-terminal domain.

Belongs to the AccA family. As to quaternary structure, acetyl-CoA carboxylase is a heterohexamer composed of biotin carboxyl carrier protein (AccB), biotin carboxylase (AccC) and two subunits each of ACCase subunit alpha (AccA) and ACCase subunit beta (AccD).

It is found in the cytoplasm. It carries out the reaction N(6)-carboxybiotinyl-L-lysyl-[protein] + acetyl-CoA = N(6)-biotinyl-L-lysyl-[protein] + malonyl-CoA. It participates in lipid metabolism; malonyl-CoA biosynthesis; malonyl-CoA from acetyl-CoA: step 1/1. Functionally, component of the acetyl coenzyme A carboxylase (ACC) complex. First, biotin carboxylase catalyzes the carboxylation of biotin on its carrier protein (BCCP) and then the CO(2) group is transferred by the carboxyltransferase to acetyl-CoA to form malonyl-CoA. This Tolumonas auensis (strain DSM 9187 / NBRC 110442 / TA 4) protein is Acetyl-coenzyme A carboxylase carboxyl transferase subunit alpha.